Consider the following 678-residue polypeptide: Dol-P-Man:Man(7)GlcNAc(2)-PP-Dol alpha-1,6-mannosyltransferase (678 aa).

The next 11 helical transmembrane spans lie at 1–21 (MDIL…FTKV), 56–76 (FIGP…FETL), 81–101 (FWAQ…AWNS), 109–129 (IYGV…FHFM), 133–153 (TRPL…AYWL), 168–188 (ILVF…VSLL), 200–220 (VALP…SFFW), 252–272 (FYSA…IGVA), 279–299 (PLVL…HKEL), 301–321 (FIIY…QRIW), and 334–354 (ALAC…LLVI).

Belongs to the glycosyltransferase 22 family.

The protein resides in the endoplasmic reticulum membrane. The enzyme catalyses an alpha-D-Man-(1-&gt;2)-alpha-D-Man-(1-&gt;2)-alpha-D-Man-(1-&gt;3)-[alpha-D-Man-(1-&gt;2)-alpha-D-Man-(1-&gt;3)-alpha-D-Man-(1-&gt;6)]-beta-D-Man-(1-&gt;4)-beta-D-GlcNAc-(1-&gt;4)-alpha-D-GlcNAc-diphospho-di-trans,poly-cis-dolichol + a di-trans,poly-cis-dolichyl beta-D-mannosyl phosphate = an alpha-D-Man-(1-&gt;2)-alpha-D-Man-(1-&gt;2)-alpha-D-Man-(1-&gt;3)-[alpha-D-Man-(1-&gt;2)-alpha-D-Man-(1-&gt;3)-[alpha-D-Man-(1-&gt;6)]-alpha-D-Man-(1-&gt;6)]-beta-D-Man-(1-&gt;4)-beta-D-GlcNAc-(1-&gt;4)-alpha-D-GlcNAc-diphospho-di-trans,poly-cis-dolichol + a di-trans,poly-cis-dolichyl phosphate + H(+). The protein operates within protein modification; protein glycosylation. Mannosyltransferase that operates in the biosynthetic pathway of dolichol-linked oligosaccharides, the glycan precursors employed in protein asparagine (N)-glycosylation. The assembly of dolichol-linked oligosaccharides begins on the cytosolic side of the endoplasmic reticulum membrane and finishes in its lumen. The sequential addition of sugars to dolichol pyrophosphate produces dolichol-linked oligosaccharides containing fourteen sugars, including two GlcNAcs, nine mannoses and three glucoses. Once assembled, the oligosaccharide is transferred from the lipid to nascent proteins by oligosaccharyltransferases. In the lumen of the endoplasmic reticulum, adds the eighth mannose residue in an alpha-1,6 linkage onto Man(7)GlcNAc(2)-PP-dolichol to produce Man(8)GlcNAc(2)-PP-dolichol. This is Dol-P-Man:Man(7)GlcNAc(2)-PP-Dol alpha-1,6-mannosyltransferase from Drosophila melanogaster (Fruit fly).